We begin with the raw amino-acid sequence, 146 residues long: Anti-sigma F factor (146 aa).

The protein belongs to the anti-sigma-factor family.

The enzyme catalyses L-seryl-[protein] + ATP = O-phospho-L-seryl-[protein] + ADP + H(+). It carries out the reaction L-threonyl-[protein] + ATP = O-phospho-L-threonyl-[protein] + ADP + H(+). Binds to sigma F and blocks its ability to form an RNA polymerase holoenzyme (E-sigma F). Phosphorylates SpoIIAA on a serine residue. This phosphorylation may enable SpoIIAA to act as an anti-anti-sigma factor that counteracts SpoIIAB and thus releases sigma F from inhibition. This is Anti-sigma F factor from Bacillus cereus (strain ATCC 14579 / DSM 31 / CCUG 7414 / JCM 2152 / NBRC 15305 / NCIMB 9373 / NCTC 2599 / NRRL B-3711).